Here is a 510-residue protein sequence, read N- to C-terminus: UDP-N-acetylmuramoyl-tripeptide--D-alanyl-D-alanine ligase (510 aa).

Residue 136–142 (GSSGKTS) participates in ATP binding.

The protein belongs to the MurCDEF family. MurF subfamily.

The protein localises to the cytoplasm. The enzyme catalyses D-alanyl-D-alanine + UDP-N-acetyl-alpha-D-muramoyl-L-alanyl-gamma-D-glutamyl-meso-2,6-diaminopimelate + ATP = UDP-N-acetyl-alpha-D-muramoyl-L-alanyl-gamma-D-glutamyl-meso-2,6-diaminopimeloyl-D-alanyl-D-alanine + ADP + phosphate + H(+). The protein operates within cell wall biogenesis; peptidoglycan biosynthesis. Involved in cell wall formation. Catalyzes the final step in the synthesis of UDP-N-acetylmuramoyl-pentapeptide, the precursor of murein. The sequence is that of UDP-N-acetylmuramoyl-tripeptide--D-alanyl-D-alanine ligase from Mycobacterium bovis (strain ATCC BAA-935 / AF2122/97).